Consider the following 316-residue polypeptide: Remorin 4.1 (316 aa).

3 disordered regions span residues 1 to 108, 125 to 202, and 267 to 287; these read MLSE…PSEL, NANA…SVGQ, and AQNE…SAEA. Over residues 40–53 the composition is skewed to acidic residues; sequence EREEEVVVEEELEE. Residues 92-104 are compositionally biased toward polar residues; the sequence is RHTSIRSVGSDTA. The span at 125–135 shows a compositional bias: low complexity; that stretch reads NANAAAAAAAN. Composition is skewed to basic and acidic residues over residues 143-153 and 277-287; these read GVDDALGRIGE and KAEEKRASAEA. A coiled-coil region spans residues 242–288; sequence VEKANAWLKKYERKLEEKRAKAMEKAQNEVAKARRKAEEKRASAEAK.

Belongs to the remorin family. In terms of assembly, interacts with BAK1. In terms of processing, phosphorylated by BRI1. Phosphorylation reduces the binding affinity to BAK1. Expressed in roots, leaf blades and leaf sheaths. Expressed at low levels in stems and spikelets.

It localises to the cell membrane. Functionally, functions in abscisic acid (ABA) signaling downstream of BZIP23. Acts as antagonistic and negative regulator of brassinosteroid (BR) signaling. Binds to BAK1 and inhibits its interaction with the BR receptor BRI1. Inhibits the formation and subsequent activation of the BRI1-BAK1 receptor complex. This Oryza sativa subsp. japonica (Rice) protein is Remorin 4.1.